The sequence spans 354 residues: D-alanine--D-alanine ligase (354 aa).

In terms of domain architecture, ATP-grasp spans Lys140–Met344. Ala170–Glu225 lines the ATP pocket. Mg(2+) contacts are provided by Asp298, Glu311, and Asn313.

Belongs to the D-alanine--D-alanine ligase family. Mg(2+) serves as cofactor. The cofactor is Mn(2+).

It is found in the cytoplasm. It carries out the reaction 2 D-alanine + ATP = D-alanyl-D-alanine + ADP + phosphate + H(+). It participates in cell wall biogenesis; peptidoglycan biosynthesis. Cell wall formation. This is D-alanine--D-alanine ligase from Blochmanniella floridana.